Reading from the N-terminus, the 534-residue chain is Probable DNA polymerase epsilon subunit 2 (534 aa).

It belongs to the DNA polymerase epsilon subunit B family. Consists of four subunits.

The protein localises to the nucleus. Its function is as follows. Accessory component of the DNA polymerase epsilon complex. Participates in DNA repair and in chromosomal DNA replication. This chain is Probable DNA polymerase epsilon subunit 2 (pole-2), found in Caenorhabditis elegans.